The chain runs to 161 residues: Phosphopantetheine adenylyltransferase (161 aa).

T9 is a binding site for substrate. ATP contacts are provided by residues 9-10 (TF) and H17. Residues K41, L73, and R87 each coordinate substrate. Residues 88-90 (GLR), E98, and 123-129 (YQFISGT) contribute to the ATP site.

This sequence belongs to the bacterial CoaD family. As to quaternary structure, homohexamer. Mg(2+) serves as cofactor.

The protein resides in the cytoplasm. The enzyme catalyses (R)-4'-phosphopantetheine + ATP + H(+) = 3'-dephospho-CoA + diphosphate. Its pathway is cofactor biosynthesis; coenzyme A biosynthesis; CoA from (R)-pantothenate: step 4/5. Its function is as follows. Reversibly transfers an adenylyl group from ATP to 4'-phosphopantetheine, yielding dephospho-CoA (dPCoA) and pyrophosphate. The sequence is that of Phosphopantetheine adenylyltransferase from Janthinobacterium sp. (strain Marseille) (Minibacterium massiliensis).